A 347-amino-acid polypeptide reads, in one-letter code: GMP reductase (347 aa).

108–131 (ADFEKTQQILSQNPQLNFVCIDVA) lines the NADP(+) pocket. K(+) contacts are provided by Gly181 and Gly183. Cys186 acts as the Thioimidate intermediate in catalysis. An NADP(+)-binding site is contributed by 216-239 (IISDGGCTMPGDVAKAFGGGADFV).

The protein belongs to the IMPDH/GMPR family. GuaC type 1 subfamily. In terms of assembly, homotetramer.

The enzyme catalyses IMP + NH4(+) + NADP(+) = GMP + NADPH + 2 H(+). Its function is as follows. Catalyzes the irreversible NADPH-dependent deamination of GMP to IMP. It functions in the conversion of nucleobase, nucleoside and nucleotide derivatives of G to A nucleotides, and in maintaining the intracellular balance of A and G nucleotides. The chain is GMP reductase from Klebsiella pneumoniae subsp. pneumoniae (strain ATCC 700721 / MGH 78578).